Here is a 507-residue protein sequence, read N- to C-terminus: Glycerol kinase (507 aa).

Thr-14 serves as a coordination point for ADP. Residues Thr-14, Thr-15, and Ser-16 each contribute to the ATP site. A sn-glycerol 3-phosphate-binding site is contributed by Thr-14. Arg-18 contacts ADP. Sn-glycerol 3-phosphate-binding residues include Arg-84, Glu-85, Tyr-136, and Asp-246. Arg-84, Glu-85, Tyr-136, Asp-246, and Gln-247 together coordinate glycerol. 2 residues coordinate ADP: Thr-268 and Gly-311. Residues Thr-268, Gly-311, Gln-315, and Gly-412 each coordinate ATP. Positions 412 and 416 each coordinate ADP.

This sequence belongs to the FGGY kinase family.

It catalyses the reaction glycerol + ATP = sn-glycerol 3-phosphate + ADP + H(+). Its pathway is polyol metabolism; glycerol degradation via glycerol kinase pathway; sn-glycerol 3-phosphate from glycerol: step 1/1. Its activity is regulated as follows. Inhibited by fructose 1,6-bisphosphate (FBP). In terms of biological role, key enzyme in the regulation of glycerol uptake and metabolism. Catalyzes the phosphorylation of glycerol to yield sn-glycerol 3-phosphate. The protein is Glycerol kinase of Vibrio atlanticus (strain LGP32) (Vibrio splendidus (strain Mel32)).